The following is a 262-amino-acid chain: MDINASRALANVYDLPDDFFPKIDDLVRDAKDALEPYWRSDSIKKHVLIATHFVDLIEDFWQTTQGMHEIAEALRAVIPPTTTPVPQGYLIQHDEAEEIPLGDLFKHQEERIVSFQPDYPITARIHAHLKAYAKINEESLDRARRLLWWHYNCLLWGEANVTNYISRLRTWLSTPERYRGRDAPTIEAITRPIQVAQGGRKTTSGTRKPRGLEPRRRKVKTTVVYGRRRSKSRERRAPTPQRAGSPLPRSSSSHHRSPSPRK.

The segment at 183-262 is disordered; that stretch reads APTIEAITRP…SHHRSPSPRK (80 aa). The Bipartite nuclear localization signal motif lies at 215–233; it reads RRRKVKTTVVYGRRRSKSR. A compositionally biased stretch (basic residues) spans 215 to 234; it reads RRRKVKTTVVYGRRRSKSRE. A phosphoserine; by host mark is found at S232 and S245. Residues 252–262 are compositionally biased toward basic residues; that stretch reads SSHHRSPSPRK. The tract at residues 254–260 is RNA binding; sequence HHRSPSP.

The protein belongs to the avihepadnavirus core antigen family. As to quaternary structure, homodimerizes, then multimerizes.

The protein localises to the virion. It is found in the host cytoplasm. In terms of biological role, self assembles to form an icosahedral capsid. Most capsid appear to be large particles with an icosahedral symmetry of T=4 and consist of 240 copies of capsid protein, though a fraction forms smaller T=3 particles consisting of 180 capsid proteins. Entering capsid are transported along microtubules to the nucleus. Phosphorylation of the capsid is thought to induce exposure of nuclear localization signal in the C-terminal portion of the capsid protein that allows binding to the nuclear pore complex via the importin (karyopherin-) alpha and beta. Capsids are imported in intact form through the nuclear pore into the nuclear basket, where it probably binds NUP153. Only capsids that contain the mature viral genome can release the viral DNA and capsid protein into the nucleoplasm. Immature capsids get stucked in the basket. Capsids encapsulate the pre-genomic RNA and the P protein. Pre-genomic RNA is reverse transcribed into DNA while the capsid is still in the cytoplasm. The capsid can then either be directed to the nucleus, providing more genome for transcription, or bud through the endoplasmic reticulum to provide new virions. In Anas (ducks), this protein is Capsid protein (C).